We begin with the raw amino-acid sequence, 406 residues long: Tyrosine--tRNA ligase (406 aa).

Tyr35 serves as a coordination point for L-tyrosine. The short motif at 40–49 is the 'HIGH' region element; it reads PTADSLHVGH. 2 residues coordinate L-tyrosine: Tyr168 and Gln172. The 'KMSKS' region motif lies at 228–232; sequence KMGKT. Lys231 serves as a coordination point for ATP. Positions 340 to 404 constitute an S4 RNA-binding domain; the sequence is SELLDILVEA…RGKKNYNKIV (65 aa).

Belongs to the class-I aminoacyl-tRNA synthetase family. TyrS type 1 subfamily. As to quaternary structure, homodimer.

It is found in the cytoplasm. It carries out the reaction tRNA(Tyr) + L-tyrosine + ATP = L-tyrosyl-tRNA(Tyr) + AMP + diphosphate + H(+). Catalyzes the attachment of tyrosine to tRNA(Tyr) in a two-step reaction: tyrosine is first activated by ATP to form Tyr-AMP and then transferred to the acceptor end of tRNA(Tyr). The chain is Tyrosine--tRNA ligase from Clostridium perfringens (strain ATCC 13124 / DSM 756 / JCM 1290 / NCIMB 6125 / NCTC 8237 / Type A).